The following is a 642-amino-acid chain: Threonine--tRNA ligase (642 aa).

Residues 1 to 61 (MPVITLPDGS…ENDATLAIIT (61 aa)) enclose the TGS domain. Residues 243-534 (DHRKIGKQLD…LTEEFAGFFP (292 aa)) form a catalytic region. 3 residues coordinate Zn(2+): cysteine 334, histidine 385, and histidine 511.

Belongs to the class-II aminoacyl-tRNA synthetase family. As to quaternary structure, homodimer. Zn(2+) is required as a cofactor.

It is found in the cytoplasm. The enzyme catalyses tRNA(Thr) + L-threonine + ATP = L-threonyl-tRNA(Thr) + AMP + diphosphate + H(+). Its function is as follows. Catalyzes the attachment of threonine to tRNA(Thr) in a two-step reaction: L-threonine is first activated by ATP to form Thr-AMP and then transferred to the acceptor end of tRNA(Thr). Also edits incorrectly charged L-seryl-tRNA(Thr). This is Threonine--tRNA ligase from Salmonella gallinarum (strain 287/91 / NCTC 13346).